The sequence spans 361 residues: 3-dehydroquinate synthase (361 aa).

It belongs to the archaeal-type DHQ synthase family.

It catalyses the reaction 2-amino-2,3,7-trideoxy-D-lyxo-hept-6-ulosonate + NAD(+) + H2O = 3-dehydroquinate + NH4(+) + NADH + H(+). In terms of biological role, catalyzes the oxidative deamination and cyclization of 2-amino-3,7-dideoxy-D-threo-hept-6-ulosonic acid (ADH) to yield 3-dehydroquinate (DHQ), which is fed into the canonical shikimic pathway of aromatic amino acid biosynthesis. This is 3-dehydroquinate synthase from Methanococcus maripaludis (strain C7 / ATCC BAA-1331).